Here is a 116-residue protein sequence, read N- to C-terminus: Large ribosomal subunit protein bL19 (116 aa).

This sequence belongs to the bacterial ribosomal protein bL19 family.

In terms of biological role, this protein is located at the 30S-50S ribosomal subunit interface and may play a role in the structure and function of the aminoacyl-tRNA binding site. The chain is Large ribosomal subunit protein bL19 from Nocardioides sp. (strain ATCC BAA-499 / JS614).